The chain runs to 77 residues: Conotoxin Cl6.12 (77 aa).

The first 20 residues, 1–20 (MKFYLLLTAALLLTAVIIEA), serve as a signal peptide directing secretion. The propeptide occupies 21 to 36 (APTDHQDEARDLMREE). Disulfide bonds link Cys-43–Cys-58, Cys-51–Cys-62, and Cys-57–Cys-68.

As to expression, expressed by the venom duct.

Its subcellular location is the secreted. This chain is Conotoxin Cl6.12, found in Californiconus californicus (California cone).